The sequence spans 177 residues: Large ribosomal subunit protein uL6 (177 aa).

Belongs to the universal ribosomal protein uL6 family. As to quaternary structure, part of the 50S ribosomal subunit.

Functionally, this protein binds to the 23S rRNA, and is important in its secondary structure. It is located near the subunit interface in the base of the L7/L12 stalk, and near the tRNA binding site of the peptidyltransferase center. This Paracidovorax citrulli (strain AAC00-1) (Acidovorax citrulli) protein is Large ribosomal subunit protein uL6.